The following is a 33-amino-acid chain: MSDIN-like toxin proprotein 2 (33 aa).

Residues 1-10 constitute a propeptide that is removed on maturation; sequence MSDINATRLP. Residues 11-18 constitute a cross-link (cyclopeptide (Ile-Pro)); sequence IILAPIIP. The propeptide occupies 19–33; the sequence is CINDDVNSTLTSGER.

This sequence belongs to the MSDIN fungal toxin family. Processed by the macrocyclase-peptidase enzyme POPB to yield a toxic cyclic octapeptide. POPB first removes 10 residues from the N-terminus. Conformational trapping of the remaining peptide forces the enzyme to release this intermediate rather than proceed to macrocyclization. The enzyme rebinds the remaining peptide in a different conformation and catalyzes macrocyclization of the N-terminal 8 residues.

In terms of biological role, probable toxin that belongs to the MSDIN-like toxin family responsible for a large number of food poisoning cases and deaths. This Amanita phalloides (Death cap) protein is MSDIN-like toxin proprotein 2.